Here is a 461-residue protein sequence, read N- to C-terminus: ATP synthase subunit beta 2 (461 aa).

Residue 151–158 (GGAGVGKT) participates in ATP binding.

The protein belongs to the ATPase alpha/beta chains family. In terms of assembly, F-type ATPases have 2 components, CF(1) - the catalytic core - and CF(0) - the membrane proton channel. CF(1) has five subunits: alpha(3), beta(3), gamma(1), delta(1), epsilon(1). CF(0) has three main subunits: a(1), b(2) and c(9-12). The alpha and beta chains form an alternating ring which encloses part of the gamma chain. CF(1) is attached to CF(0) by a central stalk formed by the gamma and epsilon chains, while a peripheral stalk is formed by the delta and b chains.

It localises to the cell inner membrane. The enzyme catalyses ATP + H2O + 4 H(+)(in) = ADP + phosphate + 5 H(+)(out). Its function is as follows. Produces ATP from ADP in the presence of a proton gradient across the membrane. The catalytic sites are hosted primarily by the beta subunits. This is ATP synthase subunit beta 2 from Vibrio campbellii (strain ATCC BAA-1116).